Reading from the N-terminus, the 340-residue chain is Olfactory receptor 5T3 (340 aa).

The Extracellular portion of the chain corresponds to 1–55; the sequence is MDSTFTGYNLYNLQVKTEMDKLSSGLDIYRNPLKNKTEVTMFILTGFTDDFELQV. N-linked (GlcNAc...) asparagine glycosylation occurs at N35. The helical transmembrane segment at 56–76 threads the bilayer; it reads FLFLLFFAIYLFTLIGNLGLV. The Cytoplasmic portion of the chain corresponds to 77–84; the sequence is VLVIEDSW. A helical transmembrane segment spans residues 85–105; it reads LHNPMYYFLSVLSFLDACYST. Topologically, residues 106–129 are extracellular; the sequence is VVTPKMLVNFLAKNKSISFIGCAT. The N-linked (GlcNAc...) asparagine glycan is linked to N119. A disulfide bond links C127 and C219. The chain crosses the membrane as a helical span at residues 130–150; the sequence is QMLLFVTFGTTECFLLAAMAY. Topologically, residues 151–169 are cytoplasmic; it reads DHYVAIYNPLLYSVSMSPR. The chain crosses the membrane as a helical span at residues 170-190; that stretch reads VYVPLITASYVAGILHATIHI. Residues 191 to 226 are Extracellular-facing; the sequence is VATFSLSFCGSNEIRHVFCDMPPLLAISCSDTHTNQ. A helical membrane pass occupies residues 227 to 247; it reads LLLFYFVGSIEIVTILIVLIS. The Cytoplasmic portion of the chain corresponds to 248–267; the sequence is CDFILLSILKMHSAKGRQKA. A helical membrane pass occupies residues 268–288; it reads FSTCGSHLTGVTIYHGTILVS. Residues 289–301 lie on the Extracellular side of the membrane; that stretch reads YMRPSSSYASDHD. The helical transmembrane segment at 302 to 322 threads the bilayer; sequence IIVSIFYTIVIPKLNPIIYSL. The Cytoplasmic segment spans residues 323–340; sequence RNKEVKKAVKKMLKLVYK.

Belongs to the G-protein coupled receptor 1 family.

The protein resides in the cell membrane. Functionally, odorant receptor. This Homo sapiens (Human) protein is Olfactory receptor 5T3 (OR5T3).